Here is a 96-residue protein sequence, read N- to C-terminus: Putative pterin-4-alpha-carbinolamine dehydratase (96 aa).

Belongs to the pterin-4-alpha-carbinolamine dehydratase family.

The catalysed reaction is (4aS,6R)-4a-hydroxy-L-erythro-5,6,7,8-tetrahydrobiopterin = (6R)-L-erythro-6,7-dihydrobiopterin + H2O. The chain is Putative pterin-4-alpha-carbinolamine dehydratase from Prochlorococcus marinus (strain MIT 9313).